We begin with the raw amino-acid sequence, 95 residues long: FMRFamide-like neuropeptides 16 (95 aa).

The N-terminal stretch at 1 to 24 is a signal peptide; the sequence is MSLSGFEFSSIIAVLLLLIQLSSA. Residues 25–58 constitute a propeptide that is removed on maturation; the sequence is AVLPVDYASQYGVASADEMTALPEEGSLFAERPA. Residues phenylalanine 67, phenylalanine 77, and phenylalanine 87 each carry the phenylalanine amide modification. Positions 90-95 are excised as a propeptide; the sequence is SAPFEQ.

It belongs to the FARP (FMRFamide related peptide) family.

The protein resides in the secreted. Functionally, FMRFamides and FMRFamide-like peptides are neuropeptides. AQTFVRF-amide inhibits the activity of dissected pharyngeal myogenic muscle system. The sequence is that of FMRFamide-like neuropeptides 16 (flp-16) from Caenorhabditis briggsae.